A 134-amino-acid chain; its full sequence is Loki profilin-1 (134 aa).

Residues 55–62 (LALGKKGI) are loki loop.

This sequence belongs to the Asgard profilin family.

Its subcellular location is the cytoplasm. It localises to the cytoskeleton. Inhibition of rabbit actin polymerization is reduced by phosphatidylinositol-(4,5)-P2(1,2-dipalmitoyl), a soluble form of the phospholipid phosphatidylinositol, suggesting an unknown lipid might regulate actin-profilin interaction in vivo. In terms of biological role, binds to actin and affects the structure of the cytoskeleton. At high concentrations inhibits spontaneous rabbit actin nucleation. This strongly suggests this archaea has a profilin-regulated actin system, and actin-type genes can be identified in this organism. The sequence is that of Loki profilin-1 from Lokiarchaeum sp. (strain GC14_75).